The primary structure comprises 126 residues: Fluoride-specific ion channel FluC (126 aa).

2 consecutive transmembrane segments (helical) span residues 2-22 (IKSL…RWLL) and 36-56 (GTLV…AYFL). 2 residues coordinate Na(+): glycine 75 and serine 78. 2 helical membrane-spanning segments follow: residues 80 to 100 (FSTF…IWAL) and 105 to 125 (VHVI…TILF).

Belongs to the fluoride channel Fluc/FEX (TC 1.A.43) family. Homodimer.

Its subcellular location is the cell inner membrane. It catalyses the reaction fluoride(in) = fluoride(out). Na(+) is not transported, but it plays an essential structural role and its presence is essential for fluoride channel function. Its function is as follows. Fluoride-specific ion channel. Important for reducing fluoride concentration in the cell, thus reducing its toxicity. Is highly specific for fluoride ions and cannot transport chloride ions. The chain is Fluoride-specific ion channel FluC from Escherichia coli O1:K1 / APEC.